The primary structure comprises 459 residues: Exodeoxyribonuclease 7 large subunit (459 aa).

The protein belongs to the XseA family. In terms of assembly, heterooligomer composed of large and small subunits.

It is found in the cytoplasm. The catalysed reaction is Exonucleolytic cleavage in either 5'- to 3'- or 3'- to 5'-direction to yield nucleoside 5'-phosphates.. Functionally, bidirectionally degrades single-stranded DNA into large acid-insoluble oligonucleotides, which are then degraded further into small acid-soluble oligonucleotides. The polypeptide is Exodeoxyribonuclease 7 large subunit (Pseudomonas putida (strain ATCC 47054 / DSM 6125 / CFBP 8728 / NCIMB 11950 / KT2440)).